Here is an 83-residue protein sequence, read N- to C-terminus: MSKTQINLQDAFLNQLRKENIPVTIFLVNGFQLKGAVRGFDNFTVILESDGKQLMVYKHAISTVSPSRPVNTSATPEHRNVGQ.

One can recognise a Sm domain in the interval 10–70 (DAFLNQLRKE…ISTVSPSRPV (61 aa)).

Belongs to the Hfq family. As to quaternary structure, homohexamer.

Functionally, RNA chaperone that binds small regulatory RNA (sRNAs) and mRNAs to facilitate mRNA translational regulation in response to envelope stress, environmental stress and changes in metabolite concentrations. Also binds with high specificity to tRNAs. The chain is RNA-binding protein Hfq from Desulforudis audaxviator (strain MP104C).